The sequence spans 740 residues: Probable type IV piliation system protein DR_0774 (740 aa).

An N-terminal signal peptide occupies residues 1 to 20 (MNKRHALLLTAVLGMATAYA).

Belongs to the bacterial secretin family.

It localises to the cell envelope. Could be part of the type IV piliation system (T4P). May contribute at the cohesion between the S-layer and the outer membrane by forming oligomers. Could also be the main channel through which trafficking is managed. The protein is Probable type IV piliation system protein DR_0774 of Deinococcus radiodurans (strain ATCC 13939 / DSM 20539 / JCM 16871 / CCUG 27074 / LMG 4051 / NBRC 15346 / NCIMB 9279 / VKM B-1422 / R1).